A 192-amino-acid chain; its full sequence is HTH-type transcriptional repressor SCO4008 (192 aa).

The region spanning 7–67 (EATKARIFEA…SVLEKKMLDL (61 aa)) is the HTH tetR-type domain. The H-T-H motif DNA-binding region spans 30 to 49 (RIDRIAAEARANKQLIYAYY).

Homodimer. Four dimers bind to the two operator sites.

Binding of a wide range of cationic hydrophobic compounds to SCO4008 causes a decrease in DNA-binding, probably via allosteric conformational change of SCO4008. Functionally, probably regulates the expression of its own gene and the adjacent SCO4007 gene by binding to two operator sites in the SCO4007-SCO4008 intergenic region. This chain is HTH-type transcriptional repressor SCO4008, found in Streptomyces coelicolor (strain ATCC BAA-471 / A3(2) / M145).